We begin with the raw amino-acid sequence, 1238 residues long: Cryptic loci regulator protein 1 (1238 aa).

6 disordered regions span residues 133-156, 196-237, 277-303, 546-568, 696-735, and 784-824; these read TQQQ…TEPN, PFSN…PSSI, ASLY…LGSM, QKSV…IDTT, SDNT…PFVH, and TLKE…QSRS. Positions 214 to 223 are enriched in polar residues; it reads NVKNNSKKTA. Low complexity predominate over residues 224 to 237; the sequence is SSVNSNHSSIPSSI. Residues 291-303 are compositionally biased toward polar residues; that stretch reads SSRNTSSYNLGSM. The span at 702 to 723 shows a compositional bias: low complexity; the sequence is SLPKPSNSKLSSISSDGDASSN. The span at 785-796 shows a compositional bias: basic and acidic residues; it reads LKEDASSTKQAK. Residues 810 to 819 show a composition bias toward polar residues; sequence NDVSKNNSGE. A C2H2-type zinc finger spans residues 1062–1087; it reads LNCEVSNCKKCFSNYEDMFKHLQHSH.

As to quaternary structure, interacts with clr3.

It is found in the nucleus. Its subcellular location is the chromosome. The protein resides in the centromere. The protein localises to the telomere. Its function is as follows. Regulates silencing of the mat2 and mat3 loci. Organizes the chromatin structure of the mating-type region where it also participates in establishing the 'cold spot' for recombination. Required for proper positioning of nucleosomes at heterochromatic loci and for transcriptional gene silencing (TGS) function of the Snf2/Hdac-containing repressor complex (SHREC). The polypeptide is Cryptic loci regulator protein 1 (clr1) (Schizosaccharomyces pombe (strain 972 / ATCC 24843) (Fission yeast)).